The sequence spans 667 residues: WD40 repeat-containing protein DDB_G0271002 (667 aa).

WD repeat units follow at residues 165-204 (NHGV…PQET) and 210-249 (KHKH…LLRI). Positions 278 to 293 (SSNSRDNNNNNSNSNN) are enriched in low complexity. Disordered regions lie at residues 278 to 301 (SSNS…GIII), 316 to 345 (LVEN…DNDD), and 389 to 440 (DIIF…ATTT). Positions 325 to 345 (PMPEEEEEEEEEEVNQVDNDD) are enriched in acidic residues. The span at 400–410 (NQHQQQQQQNQ) shows a compositional bias: low complexity. A compositionally biased stretch (acidic residues) spans 411-428 (EIEEEGQEGQEEQEDGTE). Positions 429 to 440 (NENNQGTIATTT) are enriched in low complexity.

This Dictyostelium discoideum (Social amoeba) protein is WD40 repeat-containing protein DDB_G0271002.